The chain runs to 391 residues: Phosphoglycerate kinase (391 aa).

Residues 21-23, Arg-36, 59-62, Arg-113, and Arg-146 each bind substrate; these read DLN and HLGR. Residues Lys-197, Glu-319, and 345 to 348 each bind ATP; that span reads GGDT.

Belongs to the phosphoglycerate kinase family. As to quaternary structure, monomer.

Its subcellular location is the cytoplasm. It carries out the reaction (2R)-3-phosphoglycerate + ATP = (2R)-3-phospho-glyceroyl phosphate + ADP. It functions in the pathway carbohydrate degradation; glycolysis; pyruvate from D-glyceraldehyde 3-phosphate: step 2/5. The polypeptide is Phosphoglycerate kinase (Xylella fastidiosa (strain 9a5c)).